The primary structure comprises 396 residues: Enoyl-[acyl-carrier-protein] reductase [NADH] (396 aa).

NAD(+) contacts are provided by residues 47-52 (GASTGF), 73-74 (FE), 110-111 (DA), and 138-139 (LA). Tyr-224 contacts substrate. Catalysis depends on Tyr-234, which acts as the Proton donor. NAD(+)-binding positions include Lys-243 and 272–274 (LVT).

This sequence belongs to the TER reductase family. Monomer.

The enzyme catalyses a 2,3-saturated acyl-[ACP] + NAD(+) = a (2E)-enoyl-[ACP] + NADH + H(+). It functions in the pathway lipid metabolism; fatty acid biosynthesis. Functionally, involved in the final reduction of the elongation cycle of fatty acid synthesis (FAS II). Catalyzes the reduction of a carbon-carbon double bond in an enoyl moiety that is covalently linked to an acyl carrier protein (ACP). The chain is Enoyl-[acyl-carrier-protein] reductase [NADH] from Flavobacterium johnsoniae (strain ATCC 17061 / DSM 2064 / JCM 8514 / BCRC 14874 / CCUG 350202 / NBRC 14942 / NCIMB 11054 / UW101) (Cytophaga johnsonae).